A 260-amino-acid chain; its full sequence is Acyl-coenzyme A diphosphatase FITM2 (260 aa).

Residues 1–23 (MERLENCAQMFQRKFLNEAFRRH) are Cytoplasmic-facing. The chain crosses the membrane as a helical span at residues 24–44 (CPVLLACIALGGSLLKELSPL). Over 45 to 57 (PDSYWNNKRNVLN) the chain is Lumenal. The helical transmembrane segment at 58-78 (VYFVKFCWGWTLWLLLPFITL) threads the bilayer. Over 79-93 (TNYKLTGSITKVLRR) the chain is Cytoplasmic. The helical transmembrane segment at 94 to 114 (LSSLLVGTLFWYLCTNLFLYI) threads the bilayer. Residues 115 to 144 (EHITGSCYESEALLDSIEHQDRKECRLHGG) are Lumenal-facing. The chain crosses the membrane as a helical span at residues 145–165 (FWHGFDISGHCFLLSYCILII). Residue His-154 is part of the active site. The Cytoplasmic portion of the chain corresponds to 166 to 189 (LEETSVIRSIQFERHWHRMAINAQ). A run of 2 helical transmembrane segments spans residues 190 to 210 (FTAL…TAVY) and 211 to 231 (FHNI…WYIT). His-212 is a catalytic residue. Over 232-260 (YRWWYLQPISPGLPPASASHSEKEPVYKN) the chain is Cytoplasmic.

The protein belongs to the FIT family. FIT2 subfamily.

Its subcellular location is the endoplasmic reticulum membrane. It carries out the reaction an acyl-CoA + H2O = an acyl-4'-phosphopantetheine + adenosine 3',5'-bisphosphate + 2 H(+). In terms of biological role, fatty acyl-coenzyme A (CoA) diphosphatase that hydrolyzes fatty acyl-CoA to yield acyl-4'-phosphopantetheine and adenosine 3',5'-bisphosphate. Preferentially hydrolyzes unsaturated long-chain acyl-CoA substrates in the endoplasmic reticulum (ER) lumen. This catalytic activity is required for maintaining ER structure and for lipid droplets (LDs) biogenesis, which are lipid storage organelles involved in maintaining lipid and energy homeostasis. May directly bind to diacylglycerol (DAGs) and triacylglycerol, which is also important for LD biogenesis. May support directional budding of nacent LDs from the ER into the cytosol by reducing DAG levels at sites of LD formation. May play a role in the regulation of cell morphology, ER morphology and cytoskeletal organization. The chain is Acyl-coenzyme A diphosphatase FITM2 from Xenopus laevis (African clawed frog).